The chain runs to 316 residues: Elongation factor Ts, mitochondrial (316 aa).

The transit peptide at 1–18 (MFARAPFVRLLSTTSRNL) directs the protein to the mitochondrion. The segment at 245 to 269 (EAAESVKTQEGLRSQEGHDPNADPV) is disordered.

Belongs to the EF-Ts family.

It localises to the mitochondrion. Functionally, associates with the EF-Tu.GDP complex and induces the exchange of GDP to GTP. It remains bound to the aminoacyl-tRNA.EF-Tu.GTP complex up to the GTP hydrolysis stage on the ribosome. This is Elongation factor Ts, mitochondrial from Caenorhabditis elegans.